We begin with the raw amino-acid sequence, 879 residues long: Beta-mannosidase (879 aa).

An N-terminal signal peptide occupies residues methionine 1–alanine 19. N-linked (GlcNAc...) asparagine glycosylation is found at asparagine 35, asparagine 77, asparagine 89, and asparagine 113. A disulfide bond links cysteine 167 and cysteine 176. Tryptophan 190–tryptophan 192 provides a ligand contact to substrate. N-linked (GlcNAc...) asparagine glycosylation is found at asparagine 226, asparagine 297, and asparagine 302. Position 456 (asparagine 456) interacts with substrate. Glutamate 457 acts as the Proton donor in catalysis. Disulfide bonds link cysteine 540-cysteine 629, cysteine 732-cysteine 761, and cysteine 764-cysteine 769. Glutamate 554 acts as the Nucleophile in catalysis. N-linked (GlcNAc...) asparagine glycosylation occurs at asparagine 736. Residues asparagine 803 and asparagine 807 are each glycosylated (N-linked (GlcNAc...) asparagine).

The protein belongs to the glycosyl hydrolase 2 family. As to quaternary structure, monomer. In terms of tissue distribution, highest level in liver, high levels in lung, testis, skin and spleen, moderate level in thymus. Activity found in plasma, kidney, liver, spleen, pancreas, brain, testis, epididymis, heart, lung and skeletal muscle.

It is found in the lysosome. It carries out the reaction Hydrolysis of terminal, non-reducing beta-D-mannose residues in beta-D-mannosides.. Its pathway is glycan metabolism; N-glycan degradation. Functionally, exoglycosidase that cleaves the single beta-linked mannose residue from the non-reducing end of all N-linked glycoprotein oligosaccharides. The polypeptide is Beta-mannosidase (Mus musculus (Mouse)).